Consider the following 68-residue polypeptide: DNA-directed RNA polymerase subunit omega (68 aa).

It belongs to the RNA polymerase subunit omega family. In terms of assembly, the RNAP catalytic core consists of 2 alpha, 1 beta, 1 beta' and 1 omega subunit. When a sigma factor is associated with the core the holoenzyme is formed, which can initiate transcription.

The catalysed reaction is RNA(n) + a ribonucleoside 5'-triphosphate = RNA(n+1) + diphosphate. Its function is as follows. Promotes RNA polymerase assembly. Latches the N- and C-terminal regions of the beta' subunit thereby facilitating its interaction with the beta and alpha subunits. In Listeria monocytogenes serotype 4b (strain CLIP80459), this protein is DNA-directed RNA polymerase subunit omega.